Here is a 71-residue protein sequence, read N- to C-terminus: UPF0352 protein Swoo_2786 (71 aa).

The protein belongs to the UPF0352 family.

This chain is UPF0352 protein Swoo_2786, found in Shewanella woodyi (strain ATCC 51908 / MS32).